We begin with the raw amino-acid sequence, 245 residues long: Probable octanoyltransferase 2 (245 aa).

In terms of domain architecture, BPL/LPL catalytic spans 38–227 (MEYKPVLYFQ…SIEKEFDIKE (190 aa)). Substrate is bound by residues 89 to 96 (RGGYETYH), 157 to 159 (SIG), and 170 to 172 (GMA). C188 functions as the Acyl-thioester intermediate in the catalytic mechanism.

This sequence belongs to the LipB family.

The protein resides in the cytoplasm. It carries out the reaction octanoyl-[ACP] + L-lysyl-[protein] = N(6)-octanoyl-L-lysyl-[protein] + holo-[ACP] + H(+). It participates in protein modification; protein lipoylation via endogenous pathway; protein N(6)-(lipoyl)lysine from octanoyl-[acyl-carrier-protein]: step 1/2. In terms of biological role, catalyzes the transfer of endogenously produced octanoic acid from octanoyl-acyl-carrier-protein onto the lipoyl domains of lipoate-dependent enzymes. Lipoyl-ACP can also act as a substrate although octanoyl-ACP is likely to be the physiological substrate. The polypeptide is Probable octanoyltransferase 2 (Picrophilus torridus (strain ATCC 700027 / DSM 9790 / JCM 10055 / NBRC 100828 / KAW 2/3)).